Reading from the N-terminus, the 238-residue chain is Probable 2-phosphosulfolactate phosphatase (238 aa).

Belongs to the ComB family. Mg(2+) is required as a cofactor.

The catalysed reaction is (2R)-O-phospho-3-sulfolactate + H2O = (2R)-3-sulfolactate + phosphate. The chain is Probable 2-phosphosulfolactate phosphatase from Clostridium beijerinckii (strain ATCC 51743 / NCIMB 8052) (Clostridium acetobutylicum).